An 88-amino-acid polypeptide reads, in one-letter code: Small ribosomal subunit protein bS18A (88 aa).

It belongs to the bacterial ribosomal protein bS18 family. Part of the 30S ribosomal subunit. Forms a tight heterodimer with protein bS6.

Its function is as follows. Binds as a heterodimer with protein bS6 to the central domain of the 16S rRNA, where it helps stabilize the platform of the 30S subunit. In Roseiflexus sp. (strain RS-1), this protein is Small ribosomal subunit protein bS18A.